A 261-amino-acid chain; its full sequence is 5-oxoprolinase subunit A (261 aa).

This sequence belongs to the LamB/PxpA family. As to quaternary structure, forms a complex composed of PxpA, PxpB and PxpC.

It catalyses the reaction 5-oxo-L-proline + ATP + 2 H2O = L-glutamate + ADP + phosphate + H(+). Catalyzes the cleavage of 5-oxoproline to form L-glutamate coupled to the hydrolysis of ATP to ADP and inorganic phosphate. The polypeptide is 5-oxoprolinase subunit A (Symbiobacterium thermophilum (strain DSM 24528 / JCM 14929 / IAM 14863 / T)).